A 574-amino-acid chain; its full sequence is Septation ring formation regulator EzrA (574 aa).

Topologically, residues 1–7 (MSNGLII) are extracellular. Residues 8–26 (LIIVIAVALILAYVAAVVL) traverse the membrane as a helical segment. Topologically, residues 27-574 (RKRNETLLDS…YEKTRENIRF (548 aa)) are cytoplasmic. 3 coiled-coil regions span residues 104-141 (LKAKHAIDSIESQINLVEEDIELIREALADLEKQEAKN), 267-424 (NITQ…QKVN), and 456-524 (ASDH…SIQE).

It belongs to the EzrA family.

The protein resides in the cell membrane. Negative regulator of FtsZ ring formation; modulates the frequency and position of FtsZ ring formation. Inhibits FtsZ ring formation at polar sites. Interacts either with FtsZ or with one of its binding partners to promote depolymerization. The polypeptide is Septation ring formation regulator EzrA (Streptococcus gordonii (strain Challis / ATCC 35105 / BCRC 15272 / CH1 / DL1 / V288)).